We begin with the raw amino-acid sequence, 824 residues long: Translation initiation factor IF-2 (824 aa).

The interval Met1 to Asp234 is disordered. Basic and acidic residues-rich tracts occupy residues Gly59 to Leu75 and Lys82 to Ala144. Residues Pro145 to Ala159 show a composition bias toward low complexity. Residues Ala170–Gly186 are compositionally biased toward basic and acidic residues. The tr-type G domain maps to Pro321 to Lys491. Positions Gly330–Thr337 are G1. Gly330–Thr337 is a binding site for GTP. The tract at residues Gly355–His359 is G2. Residues Asp377–Gly380 are G3. GTP is bound by residues Asp377–His381 and Asn431–Asp434. The tract at residues Asn431–Asp434 is G4. Residues Ser467 to Met469 are G5.

This sequence belongs to the TRAFAC class translation factor GTPase superfamily. Classic translation factor GTPase family. IF-2 subfamily.

The protein resides in the cytoplasm. Functionally, one of the essential components for the initiation of protein synthesis. Protects formylmethionyl-tRNA from spontaneous hydrolysis and promotes its binding to the 30S ribosomal subunits. Also involved in the hydrolysis of GTP during the formation of the 70S ribosomal complex. This chain is Translation initiation factor IF-2, found in Jannaschia sp. (strain CCS1).